The sequence spans 219 residues: Ribose-5-phosphate isomerase A (219 aa).

Residues 28 to 31 (SGST), 81 to 84 (DGAD), and 94 to 97 (KGGG) each bind substrate. E103 acts as the Proton acceptor in catalysis. Substrate is bound at residue K121.

This sequence belongs to the ribose 5-phosphate isomerase family. Homodimer.

It carries out the reaction aldehydo-D-ribose 5-phosphate = D-ribulose 5-phosphate. Its pathway is carbohydrate degradation; pentose phosphate pathway; D-ribose 5-phosphate from D-ribulose 5-phosphate (non-oxidative stage): step 1/1. Catalyzes the reversible conversion of ribose-5-phosphate to ribulose 5-phosphate. This chain is Ribose-5-phosphate isomerase A, found in Mannheimia succiniciproducens (strain KCTC 0769BP / MBEL55E).